The sequence spans 308 residues: uncharacterized protein (308 aa).

The region spanning 5–236 (LELQQLKKTY…LKSETFILDL (232 aa)) is the ABC transporter domain. Position 38–45 (38–45 (GPNGAGKS)) interacts with ATP.

This sequence belongs to the ABC transporter superfamily.

This is an uncharacterized protein from Escherichia coli (strain K12).